We begin with the raw amino-acid sequence, 377 residues long: MSELDYYQVLGVSRTASQEEIKRAYRKLVLKYHPDHNPGDKNAEQKIKNINEAYDILKDEKKRSAYDQLGHQTFKNSGGGNYQQHHGFTGGIDPNDIFENIFGDFMGARRSSKTAFSKKAGANLKYDISLTLEEAFYGVTKIISFKTALTCEACTGKGSLDNNSTSSCPTCRGSGVTRSQQGFFFFENTCQTCRGAGHVIKNPCTKCYGEGRYINTRNLEVKIPAGVKEGSRIKLTGEGEAGSRGGKTGDLYVCITLIPHNTFSVDGNDLHCQLDINCTTAALGGEVEVTDITGSKLKLKIPAGTQNNHKLKLSGKGMQILHSDRCGNMIVHVNIKVPKSLTKSQRELMIKLDKELNEASEEGFLSKVRNFWTSGSE.

The J domain maps to aspartate 5–glycine 70. The segment at glycine 138 to threonine 216 adopts a CR-type zinc-finger fold. Zn(2+) contacts are provided by cysteine 151, cysteine 154, cysteine 168, cysteine 171, cysteine 190, cysteine 193, cysteine 204, and cysteine 207. 4 CXXCXGXG motif repeats span residues cysteine 151–glycine 158, cysteine 168–glycine 175, cysteine 190–glycine 197, and cysteine 204–glycine 211.

It belongs to the DnaJ family. In terms of assembly, homodimer. Zn(2+) serves as cofactor.

It is found in the cytoplasm. Its function is as follows. Participates actively in the response to hyperosmotic and heat shock by preventing the aggregation of stress-denatured proteins and by disaggregating proteins, also in an autonomous, DnaK-independent fashion. Unfolded proteins bind initially to DnaJ; upon interaction with the DnaJ-bound protein, DnaK hydrolyzes its bound ATP, resulting in the formation of a stable complex. GrpE releases ADP from DnaK; ATP binding to DnaK triggers the release of the substrate protein, thus completing the reaction cycle. Several rounds of ATP-dependent interactions between DnaJ, DnaK and GrpE are required for fully efficient folding. Also involved, together with DnaK and GrpE, in the DNA replication of plasmids through activation of initiation proteins. This is Chaperone protein DnaJ from Orientia tsutsugamushi (strain Ikeda) (Rickettsia tsutsugamushi).